Here is a 114-residue protein sequence, read N- to C-terminus: Chaperone protein YscY (114 aa).

Binds to YscX.

Its subcellular location is the cytoplasm. Functionally, required for Yop secretion. Functions probably as a chaperone which stabilizes YscX within the cell, before its secretion. The chain is Chaperone protein YscY (yscY) from Yersinia enterocolitica.